The following is a 257-amino-acid chain: Regulator of G-protein signaling 7-binding protein (257 aa).

2 disordered regions span residues 1-45 (MSSA…SAHK) and 174-196 (ETPA…WQVS). The segment covering 32-45 (DWERRGSGSESAHK) has biased composition (basic and acidic residues). The segment covering 180 to 192 (DSSSSPVDSQQHS) has biased composition (low complexity). A Nuclear localization signal motif is present at residues 242-247 (RRRKRR). S-palmitoyl cysteine attachment occurs at residues Cys252 and Cys253.

It belongs to the RGS7BP/RGS9BP family. In terms of assembly, interacts with 'R7' family proteins RGS6, RGS7, RGS9 and RGS11. Component of some R7-Gbeta5 complex composed of some R7 protein (RGS6, RGS7, RGS9 or RGS11), Gbeta5 (GNB5) and RGS7BP. Palmitoylated. Undergoes rapid palmitoylation turnover. De novo and turnover palmitoylation are both mediated by ZDHHC2. Palmitoylation regulates the cell membrane and nuclear shuttling and the regulation of GPCR signaling. Upon depalmitoylation, it is targeted from the plasma membrane into the nucleus. GPCR signaling inhibits depalmitoylation and promotes localization to the plasma membrane.

It localises to the nucleus. The protein localises to the cytoplasm. Its subcellular location is the cell membrane. In terms of biological role, regulator of G protein-coupled receptor (GPCR) signaling. Regulatory subunit of the R7-Gbeta5 complexes that acts by controlling the subcellular location of the R7-Gbeta5 complexes. When palmitoylated, it targets the R7-Gbeta5 complexes to the plasma membrane, leading to inhibit G protein alpha subunits. When it is unpalmitoylated, the R7-Gbeta5 complexes undergo a nuclear/cytoplasmic shuttling. May also act by controlling the proteolytic stability of R7 proteins, probably by protecting them from degradation. This chain is Regulator of G-protein signaling 7-binding protein (RGS7BP), found in Homo sapiens (Human).